The primary structure comprises 408 residues: Imidazolonepropionase (408 aa).

Fe(3+) is bound by residues His73 and His75. Zn(2+)-binding residues include His73 and His75. 4-imidazolone-5-propanoate contacts are provided by Arg82, Tyr145, and His178. Tyr145 lines the N-formimidoyl-L-glutamate pocket. Residue His243 coordinates Fe(3+). Position 243 (His243) interacts with Zn(2+). Position 246 (Gln246) interacts with 4-imidazolone-5-propanoate. Asp318 lines the Fe(3+) pocket. Asp318 contributes to the Zn(2+) binding site. N-formimidoyl-L-glutamate-binding residues include Asn320 and Gly322. Residue Ser323 participates in 4-imidazolone-5-propanoate binding.

The protein belongs to the metallo-dependent hydrolases superfamily. HutI family. It depends on Zn(2+) as a cofactor. Fe(3+) is required as a cofactor.

The protein resides in the cytoplasm. The enzyme catalyses 4-imidazolone-5-propanoate + H2O = N-formimidoyl-L-glutamate. Its pathway is amino-acid degradation; L-histidine degradation into L-glutamate; N-formimidoyl-L-glutamate from L-histidine: step 3/3. Catalyzes the hydrolytic cleavage of the carbon-nitrogen bond in imidazolone-5-propanoate to yield N-formimidoyl-L-glutamate. It is the third step in the universal histidine degradation pathway. The polypeptide is Imidazolonepropionase (Shewanella baltica (strain OS155 / ATCC BAA-1091)).